The chain runs to 225 residues: Uridylate kinase (225 aa).

7–11 is a binding site for ATP; the sequence is KISGS. Residue G44 coordinates UMP. ATP contacts are provided by G45 and R49. UMP contacts are provided by residues D66 and 114–120; that span reads FQPGQST. The ATP site is built by Y147 and E150.

This sequence belongs to the UMP kinase family. In terms of assembly, homohexamer.

It is found in the cytoplasm. The catalysed reaction is UMP + ATP = UDP + ADP. Its pathway is pyrimidine metabolism; CTP biosynthesis via de novo pathway; UDP from UMP (UMPK route): step 1/1. With respect to regulation, inhibited by UTP. In terms of biological role, catalyzes the reversible phosphorylation of UMP to UDP. This is Uridylate kinase from Aeropyrum pernix (strain ATCC 700893 / DSM 11879 / JCM 9820 / NBRC 100138 / K1).